A 418-amino-acid chain; its full sequence is Serine hydroxymethyltransferase (418 aa).

(6S)-5,6,7,8-tetrahydrofolate-binding positions include Leu121 and 125–127 (GHL). Position 230 is an N6-(pyridoxal phosphate)lysine (Lys230). (6S)-5,6,7,8-tetrahydrofolate is bound at residue 355–357 (SPF).

It belongs to the SHMT family. As to quaternary structure, homodimer. Pyridoxal 5'-phosphate is required as a cofactor.

It is found in the cytoplasm. The catalysed reaction is (6R)-5,10-methylene-5,6,7,8-tetrahydrofolate + glycine + H2O = (6S)-5,6,7,8-tetrahydrofolate + L-serine. Its pathway is one-carbon metabolism; tetrahydrofolate interconversion. It functions in the pathway amino-acid biosynthesis; glycine biosynthesis; glycine from L-serine: step 1/1. In terms of biological role, catalyzes the reversible interconversion of serine and glycine with tetrahydrofolate (THF) serving as the one-carbon carrier. This reaction serves as the major source of one-carbon groups required for the biosynthesis of purines, thymidylate, methionine, and other important biomolecules. Also exhibits THF-independent aldolase activity toward beta-hydroxyamino acids, producing glycine and aldehydes, via a retro-aldol mechanism. The chain is Serine hydroxymethyltransferase from Streptococcus pyogenes serotype M49 (strain NZ131).